The chain runs to 564 residues: Dihydroxy-acid dehydratase (564 aa).

Residue Asp80 participates in Mg(2+) binding. Cys121 provides a ligand contact to [2Fe-2S] cluster. Mg(2+) contacts are provided by Asp122 and Lys123. Lys123 is subject to N6-carboxylysine. Cys194 lines the [2Fe-2S] cluster pocket. Glu447 contacts Mg(2+). Ser473 (proton acceptor) is an active-site residue.

This sequence belongs to the IlvD/Edd family. Homodimer. [2Fe-2S] cluster is required as a cofactor. Requires Mg(2+) as cofactor.

The catalysed reaction is (2R)-2,3-dihydroxy-3-methylbutanoate = 3-methyl-2-oxobutanoate + H2O. The enzyme catalyses (2R,3R)-2,3-dihydroxy-3-methylpentanoate = (S)-3-methyl-2-oxopentanoate + H2O. The protein operates within amino-acid biosynthesis; L-isoleucine biosynthesis; L-isoleucine from 2-oxobutanoate: step 3/4. It functions in the pathway amino-acid biosynthesis; L-valine biosynthesis; L-valine from pyruvate: step 3/4. Functions in the biosynthesis of branched-chain amino acids. Catalyzes the dehydration of (2R,3R)-2,3-dihydroxy-3-methylpentanoate (2,3-dihydroxy-3-methylvalerate) into 2-oxo-3-methylpentanoate (2-oxo-3-methylvalerate) and of (2R)-2,3-dihydroxy-3-methylbutanoate (2,3-dihydroxyisovalerate) into 2-oxo-3-methylbutanoate (2-oxoisovalerate), the penultimate precursor to L-isoleucine and L-valine, respectively. The sequence is that of Dihydroxy-acid dehydratase from Listeria monocytogenes serotype 4b (strain CLIP80459).